Here is a 188-residue protein sequence, read N- to C-terminus: Phosphatidylinositol N-acetylglucosaminyltransferase subunit H (188 aa).

It belongs to the PIGH family. In terms of assembly, component of the glycosylphosphatidylinositol-N-acetylglucosaminyltransferase (GPI-GnT) complex composed at least by PIGA, PIGC, PIGH, PIGP, PIGQ, PIGY and DPM2. Interacts with PIGQ.

It localises to the cytoplasm. It functions in the pathway glycolipid biosynthesis; glycosylphosphatidylinositol-anchor biosynthesis. Its function is as follows. Part of the glycosylphosphatidylinositol-N-acetylglucosaminyltransferase (GPI-GnT) complex that catalyzes the transfer of N-acetylglucosamine from UDP-N-acetylglucosamine to phosphatidylinositol and participates in the first step of GPI biosynthesis. This is Phosphatidylinositol N-acetylglucosaminyltransferase subunit H from Homo sapiens (Human).